A 530-amino-acid chain; its full sequence is Rho GTPase-activating protein 36 (530 aa).

Positions 1 to 19 (MPPLLLLSALIFLVNVLGG) are cleaved as a signal peptide. Positions 209–409 (MSLNPIAKQI…AMIDNWDVLF (201 aa)) constitute a Rho-GAP domain. The disordered stretch occupies residues 471-512 (GQSKPFDEGSSEEPAVPPGTARSHDDEEGAGNPLILEQDRPL).

As to quaternary structure, may interacts (via the Rho-GAP domain) with the active form of RAC1.

In terms of biological role, GTPase activator for the Rho-type GTPases by converting them to an inactive GDP-bound state. This chain is Rho GTPase-activating protein 36 (ARHGAP36), found in Bos taurus (Bovine).